The chain runs to 201 residues: Recombination protein RecR (201 aa).

Residues 57-72 (CADCRTFTEQPVCTIC) form a C4-type zinc finger. In terms of domain architecture, Toprim spans 81-176 (GQICVVESPA…MASRIAHGVP (96 aa)).

This sequence belongs to the RecR family.

May play a role in DNA repair. It seems to be involved in an RecBC-independent recombinational process of DNA repair. It may act with RecF and RecO. The protein is Recombination protein RecR of Sodalis glossinidius (strain morsitans).